We begin with the raw amino-acid sequence, 179 residues long: uncharacterized protein (179 aa).

The segment at Thr27–Lys54 is disordered.

This is an uncharacterized protein from Escherichia coli (strain K12).